The sequence spans 907 residues: MPTAAAPIISSVQKLVLYETRARYFLVGSNNAETKYRVLKIDRTEPKDLVIIDDRHVYTQQEVRELLGRLDLGNRTKMGQKGSSGLFRAVSAFGVVGFVRFLEGYYIVLITKRRKMADIGGHAIYKVEDTNMIYIPNDSVRVTHPDEARYLRIFQNVDLSSNFYFSYSYDLSHSLQYNLTVLRMPLEMLKSEMTQNRQESFDIFEDEGLITQGGSGVFGICSEPYMKYVWNGELLDIIKSTVHRDWLLYIIHGFCGQSKLLIYGRPVYVTLIARRSSKFAGTRFLKRGANCEGDVANEVETEQILCDASVMSFTAGSYSSYVQVRGSVPLYWSQDISTMMPKPPITLDQADPFAHVAALHFDQMFQRFGSPIIILNLVKEREKRKHERILSEELVAAVTYLNQFLPPEHTIVYIPWDMAKYTKSKLCNVLDRLNVIAESVVKKTGFFVNRPDSYCSILRPDEKWNELGGCVIPTGRLQTGILRTNCVDCLDRTNTAQFMVGKCALAYQLYSLGLIDKPNLQFDTDAVRLFEELYEDHGDTLSLQYGGSQLVHRVKTYRKIAPWTQHSKDIMQTLSRYYSNAFSDADRQDSINLFLGVFHPTEGKPHLWELPTDFYLHHKNTMRLLPTRRSYTYWWTPEVIKHLPLPYDEVICAVNLKKLIVKKFHKYEEEIDIHNEFFRPYELSSFDDTFCLAMTSSARDFMPKTVGIDPSPFTVRKPDETGKSVLGNKSNREEAVLQRKTAASAPPPPSEEAVSSSSEDDSGTDREEEGSVSQRSTPVKMTDAGDSAKVTENVVQPMKELYGINLSDGLSEEDFSIYSRFVQLGQSQHKQDKNSQQPCSRCSDGVIKLTPISAFSQDNIYEVQPPRVDRKSTEIFQAHIQASQGIMQPLGKEDSSMYREYIRNRYL.

Residues 154-547 (FQNVDLSSNF…GDTLSLQYGG (394 aa)) enclose the SAC domain. The disordered stretch occupies residues 707–788 (GIDPSPFTVR…VKMTDAGDSA (82 aa)). Residues 758-770 (SEDDSGTDREEEG) show a composition bias toward acidic residues.

In terms of assembly, component of the PI(3,5)P2 regulatory complex/PAS complex, at least composed of PIKFYVE, FIG4 and VAC14. VAC14 nucleates the assembly of the complex and serves as a scaffold by pentamerizing into a star-shaped structure, which can bind a single copy each of PIKFYVE and FIG4 and coordinates their activities.

It localises to the endosome membrane. The catalysed reaction is a 1,2-diacyl-sn-glycero-3-phospho-(1D-myo-inositol-3,5-bisphosphate) + H2O = a 1,2-diacyl-sn-glycero-3-phospho-(1D-myo-inositol-3-phosphate) + phosphate. It carries out the reaction a 1,2-diacyl-sn-glycero-3-phospho-(1D-myo-inositol-4,5-bisphosphate) + H2O = a 1,2-diacyl-sn-glycero-3-phospho-(1D-myo-inositol 4-phosphate) + phosphate. The enzyme catalyses a 1,2-diacyl-sn-glycero-3-phospho-(1D-myo-inositol-3,4,5-trisphosphate) + H2O = a 1,2-diacyl-sn-glycero-3-phospho-(1D-myo-inositol-3,4-bisphosphate) + phosphate. It catalyses the reaction O-phospho-L-seryl-[protein] + H2O = L-seryl-[protein] + phosphate. Dual specificity phosphatase component of the PI(3,5)P2 regulatory complex which regulates both the synthesis and turnover of phosphatidylinositol 3,5-bisphosphate (PtdIns(3,5)P2). Catalyzes the dephosphorylation of phosphatidylinositol 3,5-bisphosphate (PtdIns(3,5)P2) to form phosphatidylinositol 3-phosphate. Has serine-protein phosphatase activity acting on PIKfyve to stimulate its lipid kinase activity, its catalytically activity being required for maximal PI(3,5)P2 production. In vitro, hydrolyzes all three D5-phosphorylated polyphosphoinositide and although displaying preferences for PtdIns(3,5)P2, it is capable of hydrolyzing PtdIns(3,4,5)P3 and PtdIns(4,5)P2, at least in vitro. The protein is Polyphosphoinositide phosphatase of Homo sapiens (Human).